A 183-amino-acid polypeptide reads, in one-letter code: Photosystem II extrinsic protein V (183 aa).

The N-terminal stretch at 1–31 (MTFGHCRRASTLRSAFVLGLCGLLLAGCSGA) is a signal peptide. The heme c site is built by C84, C87, H88, and C138.

It belongs to the cytochrome c family. PsbV subfamily. As to quaternary structure, PSII is composed of 1 copy each of membrane proteins PsbA, PsbB, PsbC, PsbD, PsbE, PsbF, PsbH, PsbI, PsbJ, PsbK, PsbL, PsbM, PsbT, PsbX, Psb30/Ycf12, peripheral proteins PsbO, CyanoQ (PsbQ), PsbU, PsbV and a large number of cofactors. It forms dimeric complexes. The cofactor is heme c.

The protein localises to the cell inner membrane. Probably one of the extrinsic, lumenal subunits of photosystem II (PSII). PSII is a light-driven water plastoquinone oxidoreductase, using light energy to abstract electrons from H(2)O, generating a proton gradient subsequently used for ATP formation. The extrinsic proteins stabilize the structure of photosystem II oxygen-evolving complex (OEC), the ion environment of oxygen evolution and protect the OEC against heat-induced inactivation. Low-potential cytochrome c that plays a role in the OEC of PSII. The chain is Photosystem II extrinsic protein V (psbV1) from Gloeobacter violaceus (strain ATCC 29082 / PCC 7421).